A 605-amino-acid polypeptide reads, in one-letter code: E3 ubiquitin-protein ligase synoviolin A (605 aa).

A helical transmembrane segment spans residues 1-19; the sequence is MTGASLALTAAVVAHAYYL. At 20 to 35 the chain is on the lumenal side; the sequence is KNQFYPTVVYLTKSSP. The chain crosses the membrane as a helical span at residues 36–56; it reads SMAVLYIQAFVLVFLLGKFMG. Over 57–92 the chain is Cytoplasmic; the sequence is KVFFGQLRAAEMEHLLERSWYAVTETCLAFTVFRDD. A helical membrane pass occupies residues 93 to 113; sequence FSPRFVALFTLLLFLKCFHWL. Residues 114 to 129 are Lumenal-facing; sequence AEDRVDFMERSPNISW. The chain crosses the membrane as a helical span at residues 130 to 150; that stretch reads LFHFRILALMLLLGVLDAFFV. At 151–163 the chain is on the cytoplasmic side; the sequence is SHAYHSLVIRGAS. A helical transmembrane segment spans residues 164 to 184; that stretch reads VQLVFGFEYAILMTVILTVFI. The Lumenal portion of the chain corresponds to 185–218; that stretch reads KYILHSVDLQSENPWDNKAVYMLYTELFTGFIKV. Residues 219-239 form a helical membrane-spanning segment; sequence LLYVAFMTIMVKVHTFPLFAI. The segment at 230–264 is interaction with p53/TP53; sequence KVHTFPLFAIRPMYLAMRQFKKAVTDAIMSRRAIR. Residues 240-605 lie on the Cytoplasmic side of the membrane; sequence RPMYLAMRQF…KLETGTTDSQ (366 aa). Zn(2+) contacts are provided by cysteine 285, cysteine 288, cysteine 301, histidine 303, histidine 306, cysteine 309, cysteine 320, and cysteine 323. The RING-type; atypical zinc finger occupies 285–324; the sequence is CIICREEMVTGAKRLPCNHIFHTSCLRSWFQRQQTCPTCR. Positions 334-355 are enriched in low complexity; that stretch reads TQPQTPTEQQNQHQNQAQQQPT. The interval 334–433 is disordered; it reads TQPQTPTEQQ…QPGAALPGFP (100 aa). The span at 356-391 shows a compositional bias: pro residues; that stretch reads PVIPPQPNFPPGILPPFPPGMFPLWPPMGPFPPVPG. Over residues 403 to 414 the composition is skewed to low complexity; that stretch reads PGSSSGSSPRPG. A compositionally biased stretch (polar residues) spans 415–424; it reads ETSNVGSESQ. Positions 465-496 form a coiled coil; the sequence is EELRAMEGHERQNLEARLQCLQNIHTLLDAAM. A disordered region spans residues 513–605; it reads QPPISSTSTS…KLETGTTDSQ (93 aa). Residues 516–539 are compositionally biased toward low complexity; the sequence is ISSTSTSTSSAASASTAPTTSNIS. Over residues 546–555 the composition is skewed to polar residues; that stretch reads DTTSTVTNTE. Residues 556–579 are compositionally biased toward low complexity; it reads SSQQSAPPAPVSVETLSGAEGGET.

It belongs to the HRD1 family. As to quaternary structure, homodimer.

It is found in the endoplasmic reticulum membrane. It carries out the reaction S-ubiquitinyl-[E2 ubiquitin-conjugating enzyme]-L-cysteine + [acceptor protein]-L-lysine = [E2 ubiquitin-conjugating enzyme]-L-cysteine + N(6)-ubiquitinyl-[acceptor protein]-L-lysine.. It functions in the pathway protein modification; protein ubiquitination. Its function is as follows. E3 ubiquitin-protein ligase which accepts ubiquitin specifically from endoplasmic reticulum-associated UBC7 E2 ligase and transfers it to substrates, promoting their degradation. Component of the endoplasmic reticulum quality control (ERQC) system also called ER-associated degradation (ERAD) involved in ubiquitin-dependent degradation of misfolded endoplasmic reticulum proteins. Also promotes the degradation of normal but naturally short-lived proteins. Protects cells from ER stress-induced apoptosis. Sequesters p53 in the cytoplasm and promotes its degradation, thereby negatively regulating its biological function in transcription, cell cycle regulation and apoptosis. The protein is E3 ubiquitin-protein ligase synoviolin A (syvn1-a) of Xenopus laevis (African clawed frog).